The primary structure comprises 311 residues: 1D-myo-inositol 2-acetamido-2-deoxy-alpha-D-glucopyranoside deacetylase (311 aa).

Zn(2+) contacts are provided by His-29, Asp-32, and His-162.

Belongs to the MshB deacetylase family. The cofactor is Zn(2+).

The enzyme catalyses 1D-myo-inositol 2-acetamido-2-deoxy-alpha-D-glucopyranoside + H2O = 1D-myo-inositol 2-amino-2-deoxy-alpha-D-glucopyranoside + acetate. Its function is as follows. Catalyzes the deacetylation of 1D-myo-inositol 2-acetamido-2-deoxy-alpha-D-glucopyranoside (GlcNAc-Ins) in the mycothiol biosynthesis pathway. The chain is 1D-myo-inositol 2-acetamido-2-deoxy-alpha-D-glucopyranoside deacetylase from Corynebacterium efficiens (strain DSM 44549 / YS-314 / AJ 12310 / JCM 11189 / NBRC 100395).